A 286-amino-acid polypeptide reads, in one-letter code: D-tagatose-1,6-bisphosphate aldolase subunit KbaY (286 aa).

Catalysis depends on Asp82, which acts as the Proton donor. Residues His83 and His180 each coordinate Zn(2+). Gly181 contacts dihydroxyacetone phosphate. His208 serves as a coordination point for Zn(2+). Residues 209-211 (GAS) and 230-233 (NVAT) contribute to the dihydroxyacetone phosphate site.

It belongs to the class II fructose-bisphosphate aldolase family. TagBP aldolase KbaY subfamily. In terms of assembly, homotetramer. Forms a complex with KbaZ. Zn(2+) is required as a cofactor.

It carries out the reaction D-tagatofuranose 1,6-bisphosphate = D-glyceraldehyde 3-phosphate + dihydroxyacetone phosphate. It functions in the pathway carbohydrate metabolism; D-tagatose 6-phosphate degradation; D-glyceraldehyde 3-phosphate and glycerone phosphate from D-tagatose 6-phosphate: step 2/2. Functionally, catalytic subunit of the tagatose-1,6-bisphosphate aldolase KbaYZ, which catalyzes the reversible aldol condensation of dihydroxyacetone phosphate (DHAP or glycerone-phosphate) with glyceraldehyde 3-phosphate (G3P) to produce tagatose 1,6-bisphosphate (TBP). Requires KbaZ subunit for full activity and stability. This is D-tagatose-1,6-bisphosphate aldolase subunit KbaY from Escherichia coli O45:K1 (strain S88 / ExPEC).